A 148-amino-acid chain; its full sequence is MAHLLLLHGPNLNLLGTREPEVYGRNTLAQIDAALVDRAQAAGHTLDCLQSNAEHVLVERIHAAREDGTAFILINPAAFTHTSVSLRDALLGVGLPFVEIHLSNPHTREPFRHHSYLSDKAAGVICGFGADSYRLALEAVIARLERDS.

Residue Tyr23 is the Proton acceptor of the active site. Positions 75, 81, and 88 each coordinate substrate. His101 (proton donor) is an active-site residue. Residues 102-103 (LS) and Arg112 contribute to the substrate site.

It belongs to the type-II 3-dehydroquinase family. Homododecamer.

The catalysed reaction is 3-dehydroquinate = 3-dehydroshikimate + H2O. The protein operates within metabolic intermediate biosynthesis; chorismate biosynthesis; chorismate from D-erythrose 4-phosphate and phosphoenolpyruvate: step 3/7. Its function is as follows. Catalyzes a trans-dehydration via an enolate intermediate. The protein is 3-dehydroquinate dehydratase of Xanthomonas campestris pv. campestris (strain B100).